Reading from the N-terminus, the 319-residue chain is Telomere-binding protein cav (319 aa).

Positions 107–312 (RRKMVQPYPE…SISFQNSGSE (206 aa)) are required for binding to Su(var)205. Disordered stretches follow at residues 141–163 (WQKQKRRNQSAHATQPDSQDNEV) and 186–248 (PSDL…PDYY). 2 consecutive short sequence motifs (su(var)205-binding Pro-containing repeat) follow at residues 220–224 (PETQM) and 273–279 (PETEMNE). Positions 291–311 (SMSIGPSINSDGSISFQNSGS) are enriched in polar residues. The tract at residues 291 to 319 (SMSIGPSINSDGSISFQNSGSEPIDVDVN) is disordered.

In terms of assembly, interacts (via C-terminus) with Su(var)205 dimer (via hinge and chromoshadow domain) and with moi to form the terminin, telomere-capping, complex. Interacts with HP6, which is also part of the terminin complex.

The protein resides in the nucleus. The protein localises to the chromosome. Its subcellular location is the telomere. Binds to chromosome ends in a sequence-dependent manner and is required for telomere capping. This chain is Telomere-binding protein cav, found in Drosophila yakuba (Fruit fly).